The chain runs to 634 residues: Probable potassium transport system protein Kup (634 aa).

12 consecutive transmembrane segments (helical) span residues I21–L41, I61–I81, I110–I130, P148–C168, F180–A200, F217–T237, W258–L278, G296–I316, I348–F368, A377–A397, L408–I428, and D432–L452.

The protein belongs to the HAK/KUP transporter (TC 2.A.72) family.

Its subcellular location is the cell inner membrane. It carries out the reaction K(+)(in) + H(+)(in) = K(+)(out) + H(+)(out). Its function is as follows. Transport of potassium into the cell. Likely operates as a K(+):H(+) symporter. The sequence is that of Probable potassium transport system protein Kup from Xylella fastidiosa (strain 9a5c).